The primary structure comprises 266 residues: MSGPIVIFDSGIGGLSIFDEIKKVLPDQGYCYLFDNARLPYGELEESVLIKGCVDLICEQVKRIDAVLVVVACNSASTLVLPGLRARLSIPIVGVVPAIKPAAQISKTRHIGLLATHGTIKRSYTRELIKEFAGDCKVDLFGSSELVMLAEAKLAGEKLDLIKLESQLKPIQHSDLDTLVLGCTHFPIIADEIQQVLGAGVKLLDSGKAIAQRVSYLLENIEDKLDNSAGELMAIYTTEEITPGLATRLAEKGFTTIASRSSANLD.

Residues 9-10 and 41-42 each bind substrate; these read DS and YG. The active-site Proton donor/acceptor is Cys73. 74–75 contributes to the substrate binding site; the sequence is NS. The active-site Proton donor/acceptor is the Cys183. Residue 184–185 coordinates substrate; that stretch reads TH.

This sequence belongs to the aspartate/glutamate racemases family.

It catalyses the reaction L-glutamate = D-glutamate. The protein operates within cell wall biogenesis; peptidoglycan biosynthesis. Provides the (R)-glutamate required for cell wall biosynthesis. The chain is Glutamate racemase from Shewanella halifaxensis (strain HAW-EB4).